The chain runs to 273 residues: Probable ribosomal RNA small subunit methyltransferase A (273 aa).

6 residues coordinate S-adenosyl-L-methionine: Asn23, Leu25, Gly50, Glu71, Asp95, and Asn110.

It belongs to the class I-like SAM-binding methyltransferase superfamily. rRNA adenine N(6)-methyltransferase family. RsmA subfamily.

The protein localises to the cytoplasm. Its function is as follows. Specifically dimethylates two adjacent adenosines in the loop of a conserved hairpin near the 3'-end of 16S rRNA in the 30S particle. May play a critical role in biogenesis of 30S subunits. The sequence is that of Probable ribosomal RNA small subunit methyltransferase A from Pyrococcus furiosus (strain ATCC 43587 / DSM 3638 / JCM 8422 / Vc1).